Reading from the N-terminus, the 181-residue chain is Protein Syd (181 aa).

Belongs to the Syd family.

The protein resides in the cell inner membrane. Its function is as follows. Interacts with the SecY protein in vivo. May bind preferentially to an uncomplexed state of SecY, thus functioning either as a chelating agent for excess SecY in the cell or as a regulatory factor that negatively controls the translocase function. This chain is Protein Syd, found in Citrobacter koseri (strain ATCC BAA-895 / CDC 4225-83 / SGSC4696).